Reading from the N-terminus, the 577-residue chain is Mitochondrial-processing peptidase subunit alpha (577 aa).

Residues 1–35 (MLNRFRPARLVAQSSRCLPLTRARAGPLPVNNART) constitute a mitochondrion transit peptide. The segment at 259 to 301 (SDAPGLSRTGSETSVDSLVSESSEASSESSSSSSDSSESSGGL) is disordered. Positions 269 to 301 (SETSVDSLVSESSEASSESSSSSSDSSESSGGL) are enriched in low complexity.

It belongs to the peptidase M16 family. Heterodimer of mpp (alpha) and pep (beta) subunits, forming the mitochondrial processing protease (MPP) in which mpp is involved in substrate recognition and binding and pep is the catalytic subunit.

The protein resides in the mitochondrion matrix. Functionally, substrate recognition and binding subunit of the essential mitochondrial processing protease (MPP), which cleaves the mitochondrial sequence off newly imported precursors proteins. This chain is Mitochondrial-processing peptidase subunit alpha, found in Neurospora crassa (strain ATCC 24698 / 74-OR23-1A / CBS 708.71 / DSM 1257 / FGSC 987).